The following is a 79-amino-acid chain: Small ribosomal subunit protein bS18 (79 aa).

It belongs to the bacterial ribosomal protein bS18 family. In terms of assembly, part of the 30S ribosomal subunit. Forms a tight heterodimer with protein bS6.

Its function is as follows. Binds as a heterodimer with protein bS6 to the central domain of the 16S rRNA, where it helps stabilize the platform of the 30S subunit. In Bradyrhizobium sp. (strain BTAi1 / ATCC BAA-1182), this protein is Small ribosomal subunit protein bS18.